Consider the following 700-residue polypeptide: Methionine--tRNA ligase (700 aa).

The 'HIGH' region signature appears at 13 to 23; the sequence is PYANGDIHLGH. Zn(2+) contacts are provided by Cys-144, Cys-147, Cys-157, and Cys-160. The short motif at 341–345 is the 'KMSKS' region element; it reads KMSKS. Residue Lys-344 coordinates ATP. The interval 562–587 is disordered; that stretch reads QVGAPTASQDDKAAAKNTSPAAMPSS. Residues 577–587 are compositionally biased toward polar residues; the sequence is KNTSPAAMPSS. Residues 598 to 700 form the tRNA-binding domain; sequence DFAKVEMKVA…DEAVIGDSLA (103 aa).

Belongs to the class-I aminoacyl-tRNA synthetase family. MetG type 1 subfamily. Homodimer. Zn(2+) is required as a cofactor.

It is found in the cytoplasm. The catalysed reaction is tRNA(Met) + L-methionine + ATP = L-methionyl-tRNA(Met) + AMP + diphosphate. Functionally, is required not only for elongation of protein synthesis but also for the initiation of all mRNA translation through initiator tRNA(fMet) aminoacylation. In Psychrobacter cryohalolentis (strain ATCC BAA-1226 / DSM 17306 / VKM B-2378 / K5), this protein is Methionine--tRNA ligase.